A 474-amino-acid chain; its full sequence is Carbohydrate sulfotransferase 3 (474 aa).

The Cytoplasmic segment spans residues 1 to 19 (MEKGLALPQDCRDLVHNLK). The chain crosses the membrane as a helical; Signal-anchor for type II membrane protein span at residues 20–38 (IRGRYVLFLAFVVIVFIFI). The Lumenal segment spans residues 39–474 (EKENKIISRV…LEERGTFWVT (436 aa)). N-linked (GlcNAc...) asparagine glycosylation is found at asparagine 63, asparagine 74, and asparagine 96. Position 137-143 (137-143 (TRTGSSF)) interacts with 3'-phosphoadenylyl sulfate. Asparagine 252 carries an N-linked (GlcNAc...) asparagine glycan. A 3'-phosphoadenylyl sulfate-binding site is contributed by 297-305 (RDPRAVLAS). Residues asparagine 415 and asparagine 459 are each glycosylated (N-linked (GlcNAc...) asparagine).

It belongs to the sulfotransferase 1 family. Gal/GlcNAc/GalNAc subfamily. Post-translationally, N-glycosylated.

It is found in the golgi apparatus membrane. It carries out the reaction chondroitin beta-D-glucuronate + n 3'-phosphoadenylyl sulfate = chondroitin 6'-sulfate + n adenosine 3',5'-bisphosphate + n H(+). The catalysed reaction is 3'-phosphoadenylyl sulfate + keratan = adenosine 3',5'-bisphosphate + keratan 6'-sulfate.. Functionally, sulfotransferase that utilizes 3'-phospho-5'-adenylyl sulfate (PAPS) as sulfonate donor to catalyze the transfer of sulfate to position 6 of the N-acetylgalactosamine (GalNAc) residue of chondroitin. Chondroitin sulfate constitutes the predominant proteoglycan present in cartilage and is distributed on the surfaces of many cells and extracellular matrices. Catalyzes with a lower efficiency the sulfation of Gal residues of keratan sulfate, another glycosaminoglycan. Can also catalyze the sulfation of the Gal residues in sialyl N-acetyllactosamine (sialyl LacNAc) oligosaccharides. May play a role in the maintenance of naive T-lymphocytes in the spleen. The polypeptide is Carbohydrate sulfotransferase 3 (Chst3) (Rattus norvegicus (Rat)).